Consider the following 288-residue polypeptide: 4-diphosphocytidyl-2-C-methyl-D-erythritol kinase (288 aa).

Lys10 is an active-site residue. Position 99-109 (99-109) interacts with ATP; the sequence is PMGGGLGGGSS. Asp141 is a catalytic residue.

It belongs to the GHMP kinase family. IspE subfamily. In terms of assembly, homodimer.

The catalysed reaction is 4-CDP-2-C-methyl-D-erythritol + ATP = 4-CDP-2-C-methyl-D-erythritol 2-phosphate + ADP + H(+). Its pathway is isoprenoid biosynthesis; isopentenyl diphosphate biosynthesis via DXP pathway; isopentenyl diphosphate from 1-deoxy-D-xylulose 5-phosphate: step 3/6. In terms of biological role, catalyzes the phosphorylation of the position 2 hydroxy group of 4-diphosphocytidyl-2C-methyl-D-erythritol. The polypeptide is 4-diphosphocytidyl-2-C-methyl-D-erythritol kinase (Serratia proteamaculans (strain 568)).